A 451-amino-acid polypeptide reads, in one-letter code: NADH-quinone oxidoreductase subunit D (451 aa).

The protein belongs to the complex I 49 kDa subunit family. NDH-1 is composed of 14 different subunits. Subunits NuoB, C, D, E, F, and G constitute the peripheral sector of the complex.

It is found in the cell inner membrane. It catalyses the reaction a quinone + NADH + 5 H(+)(in) = a quinol + NAD(+) + 4 H(+)(out). Functionally, NDH-1 shuttles electrons from NADH, via FMN and iron-sulfur (Fe-S) centers, to quinones in the respiratory chain. The immediate electron acceptor for the enzyme in this species is believed to be a menaquinone. Couples the redox reaction to proton translocation (for every two electrons transferred, four hydrogen ions are translocated across the cytoplasmic membrane), and thus conserves the redox energy in a proton gradient. The polypeptide is NADH-quinone oxidoreductase subunit D (Salinibacter ruber (strain DSM 13855 / M31)).